Here is a 616-residue protein sequence, read N- to C-terminus: GPI mannosyltransferase 3 (616 aa).

Residues 1 to 16 are Cytoplasmic-facing; that stretch reads MAHEVHRIKPKLGRTQ. The helical transmembrane segment at 17-37 threads the bilayer; that stretch reads IFWVFLAFRVLNAVLTRTFFQ. Over 38–86 the chain is Lumenal; the sequence is ADEFWQALEPAHWKAFKYGELTWEWKFGVRSYLFPMIFELTYRLVSLSS. A helical transmembrane segment spans residues 87 to 107; it reads ILLHYALLLLSTIGSDLLILL. The Cytoplasmic portion of the chain corresponds to 108-136; the sequence is LPKYELSWQVAEDLKRLPFDVTRSFEYYG. Residues 137–157 traverse the membrane as a helical segment; the sequence is VIYAPKIVMAVLASIGEYYIV. At 158–188 the chain is on the lumenal side; sequence RFVQKLYLLTLDKRNEKEEEERRSGLSEITK. Residues 189 to 209 form a helical membrane-spanning segment; the sequence is FALLLSLTNFFNCFFITRTFI. At 210–240 the chain is on the cytoplasmic side; that stretch reads NSFEMILTSIALYYWDWTGGQMIKESSFTKS. A helical membrane pass occupies residues 241 to 261; it reads LIFAFLACLQRPSSGLIWVIP. The Lumenal segment spans residues 262-278; the sequence is SISLILNLVGKKQYHLL. Residues 279 to 299 traverse the membrane as a helical segment; the sequence is FITFSKVLRSFFLVFTANAII. The Cytoplasmic segment spans residues 300–338; sequence DMYFYEKVTFPFFRFLKFNFTTPLSKFYGVAPWHFHFFQ. The chain crosses the membrane as a helical span at residues 339-359; the sequence is SLPIVLGASIPAFAFGLFFPL. The Lumenal segment spans residues 360–392; the sequence is SKRSFPKKYLNPFFQVKLTILLNLLVYSTLPHK. The chain crosses the membrane as a helical span at residues 393 to 413; the sequence is EFRFIFPLQPLFILISSFGLL. The Cytoplasmic segment spans residues 414 to 423; that stretch reads RLDRDYWKRL. A helical transmembrane segment spans residues 424–444; it reads SGLKSLLWLVPFVSVFIALLL. The Lumenal segment spans residues 445 to 616; it reads DTFHESGSIE…DYSDIPAADI (172 aa).

This sequence belongs to the glycosyltransferase 22 family. PIGB subfamily.

Its subcellular location is the endoplasmic reticulum membrane. Its pathway is glycolipid biosynthesis; glycosylphosphatidylinositol-anchor biosynthesis. Its function is as follows. Mannosyltransferase involved in glycosylphosphatidylinositol-anchor biosynthesis. Transfers the third mannose to Man2-GlcN-acyl-PI during GPI precursor assembly. This is GPI mannosyltransferase 3 (GPI10) from Saccharomyces cerevisiae (strain ATCC 204508 / S288c) (Baker's yeast).